The sequence spans 128 residues: Small ribosomal subunit protein uS9 (128 aa).

The segment covering 97–113 has biased composition (basic and acidic residues); that stretch reads RSEGFMTRDPRSVERKK. The interval 97 to 128 is disordered; that stretch reads RSEGFMTRDPRSVERKKPGQPKARRRFQFSKR. A compositionally biased stretch (basic residues) spans 114–128; it reads PGQPKARRRFQFSKR.

It belongs to the universal ribosomal protein uS9 family.

In Bacteroides fragilis (strain ATCC 25285 / DSM 2151 / CCUG 4856 / JCM 11019 / LMG 10263 / NCTC 9343 / Onslow / VPI 2553 / EN-2), this protein is Small ribosomal subunit protein uS9.